The primary structure comprises 285 residues: MELSSPSKKTTTSPINIPGGNRDNLIIGPHSHSFKTDPFSSNNSSLLSKISTNPSLESPFSSKSLLDCSPVQAVKKSLESEAKTHSLDEETNEQTDVKILNIADFPTDELILMISALLNRIITANDETTDVSQQVSDETEDELLTPILAFYGKNVPEIAVVQYLERIQKYCPTTNDIFLSLLVYFDRISKNYGHSSERNGCAKQLFVMDSGNIHRLLITGVTICTKFLSDFFYSNSRYAKVGGISLQELNHLELQFLILCDFKLLVSVEEMQKYANLLYKFWNDQ.

Over residues 1–14 the composition is skewed to low complexity; the sequence is MELSSPSKKTTTSP. Residues 1-42 form a disordered region; that stretch reads MELSSPSKKTTTSPINIPGGNRDNLIIGPHSHSFKTDPFSSN. Position 69 is a phosphoserine (S69).

Belongs to the cyclin family. PHO80 subfamily. In terms of assembly, forms a cyclin-CDK complex with PHO85. Interacts with the substrate proteins MMR1 and YJL084C. Interacts with the CDK inhibitor (CKI) PHO81.

The protein localises to the cytoplasm. Its activity is regulated as follows. The PCL7-PHO85 cyclin-CDK is inhibited by PHO81 in low-phosphate conditions. Functionally, cyclin partner of the cyclin-dependent kinase (CDK) PHO85. Together with cyclin PCL6, controls glycogen phosphorylase and glycogen synthase activities in response to nutrient availablility. The PCL7-PHO85 cyclin-CDK holoenzyme has GLC8 kinase activity and phosphorylates and inactivates the phosphatase PP1-2 inhibitor GLC8, causing activation of PP1-2, which then dephosphorylates and activates glycogen phosphorylase. PCL7-PHO85 also phosphorylates MMR1 and YJL084C. This Saccharomyces cerevisiae (strain ATCC 204508 / S288c) (Baker's yeast) protein is PHO85 cyclin-7 (PCL7).